A 141-amino-acid chain; its full sequence is Small ribosomal subunit protein uS12 (141 aa).

The segment covering 1 to 11 (MPTISQLVTTS) has biased composition (polar residues). A disordered region spans residues 1 to 22 (MPTISQLVTTSRQDKNYKSKSP). A 3-methylthioaspartic acid modification is found at aspartate 102.

This sequence belongs to the universal ribosomal protein uS12 family. As to quaternary structure, part of the 30S ribosomal subunit. Contacts proteins S8 and S17. May interact with IF1 in the 30S initiation complex.

Its function is as follows. With S4 and S5 plays an important role in translational accuracy. Interacts with and stabilizes bases of the 16S rRNA that are involved in tRNA selection in the A site and with the mRNA backbone. Located at the interface of the 30S and 50S subunits, it traverses the body of the 30S subunit contacting proteins on the other side and probably holding the rRNA structure together. The combined cluster of proteins S8, S12 and S17 appears to hold together the shoulder and platform of the 30S subunit. This is Small ribosomal subunit protein uS12 from Acholeplasma laidlawii (strain PG-8A).